Consider the following 136-residue polypeptide: Pilotin AspS 2 (136 aa).

The signal sequence occupies residues 1 to 24 (MSIKQMPGRVLISLLLSVTGLLSG). Cys-25 is lipidated: N-palmitoyl cysteine. A lipid anchor (S-diacylglycerol cysteine) is attached at Cys-25. A disulfide bridge connects residues Cys-94 and Cys-131.

Belongs to the GspS/AspS pilotin family. Cryo-electron microscopy shows that the complex forms a cylindrical channel with 15 GspD2 subunits, each of which interacts with its surrounding AspS2 (GspS-beta).

It localises to the cell outer membrane. Functionally, part of a type II secretion system (T2SS, formerly general secretion pathway, GSP) for the export of folded proteins across the outer membrane. Required for correct assembly of the type II secretion system-beta (T2SS-beta), for localization of GspD-beta to the cell outer membrane and for export of a labile enterotoxin by T2SS-beta. Each AspS2 binds to 2 GspD2 subunits and may clamp the monomers together, stabilizing structure and accelerating its assembly. The sequence is that of Pilotin AspS 2 from Escherichia coli O78:H11 (strain H10407 / ETEC).